The chain runs to 81 residues: Putative membrane protein insertion efficiency factor (81 aa).

It belongs to the UPF0161 family.

The protein resides in the cell inner membrane. In terms of biological role, could be involved in insertion of integral membrane proteins into the membrane. This is Putative membrane protein insertion efficiency factor from Legionella pneumophila (strain Lens).